Reading from the N-terminus, the 371-residue chain is MGVISFYLIGQLLYLIRKKYTTTYRQQQQHQYNMDSKHSTSSSSSGSLATRISNSGPISIAAYCLSSILMTVTNKYVLSGFSFNLNFFLLAVQSIVCIVTIGSLKSLNIITYRQFNKDEAKKWSPIAFLLVAMIYTSSKALQYLSIPVYTIFKNLTIILIAYGEVIWFGGKVTTMALSSFLLMVLSSVIAYYGDNAAVKSHDDAFALYLGYFWMLTNCFASAAFVLIMRKRIKLTNFKDFDTMYYNNLLSIPILLICSFIFEDWSSANVSLNFPADNRVTTITAMILSGASSVGISYCSAWCVRVTSSTTYSMVGALNKLPIALSGLIFFEAAVNFWSVSSIFVGFGAGLVYAVAKQKQQKEQSQQLPTTK.

Residues 1 to 51 (MGVISFYLIGQLLYLIRKKYTTTYRQQQQHQYNMDSKHSTSSSSSGSLATR) are Cytoplasmic-facing. Residues 52–72 (ISNSGPISIAAYCLSSILMTV) form a helical membrane-spanning segment. At 73–80 (TNKYVLSG) the chain is on the lumenal side. A helical transmembrane segment spans residues 81-101 (FSFNLNFFLLAVQSIVCIVTI). Over 102 to 121 (GSLKSLNIITYRQFNKDEAK) the chain is Cytoplasmic. A helical transmembrane segment spans residues 122 to 138 (KWSPIAFLLVAMIYTSS). The Lumenal portion of the chain corresponds to 139–145 (KALQYLS). Residues 146–162 (IPVYTIFKNLTIILIAY) form a helical membrane-spanning segment. Over 163 to 171 (GEVIWFGGK) the chain is Cytoplasmic. The helical transmembrane segment at 172–192 (VTTMALSSFLLMVLSSVIAYY) threads the bilayer. Residues 193–206 (GDNAAVKSHDDAFA) lie on the Lumenal side of the membrane. The helical transmembrane segment at 207–227 (LYLGYFWMLTNCFASAAFVLI) threads the bilayer. Topologically, residues 228-241 (MRKRIKLTNFKDFD) are cytoplasmic. A helical membrane pass occupies residues 242–262 (TMYYNNLLSIPILLICSFIFE). Residues 263-281 (DWSSANVSLNFPADNRVTT) lie on the Lumenal side of the membrane. N-linked (GlcNAc...) asparagine glycosylation occurs at Asn-268. A helical membrane pass occupies residues 282–302 (ITAMILSGASSVGISYCSAWC). The Cytoplasmic segment spans residues 303-309 (VRVTSST). A helical transmembrane segment spans residues 310 to 329 (TYSMVGALNKLPIALSGLIF). The Lumenal portion of the chain corresponds to 330 to 332 (FEA). The helical transmembrane segment at 333–355 (AVNFWSVSSIFVGFGAGLVYAVA) threads the bilayer. Residues 356 to 371 (KQKQQKEQSQQLPTTK) lie on the Cytoplasmic side of the membrane.

Belongs to the TPT transporter family. SLC35D subfamily. In terms of assembly, homooligomer.

It localises to the golgi apparatus membrane. The protein localises to the cytoplasmic vesicle membrane. Its subcellular location is the endoplasmic reticulum membrane. Involved in the import of GDP-mannose from the cytoplasm into the Golgi lumen. Involved in hyphal formation. The polypeptide is GDP-mannose transporter (VRG4) (Candida albicans (strain SC5314 / ATCC MYA-2876) (Yeast)).